Here is a 291-residue protein sequence, read N- to C-terminus: MACLSPSQLKKFQEDGFLLLEGFFTADECVAMQQRIGEIVAEMDVPLHCRTEFSTQEDEQLQTQGKTDYFLSSGDKIRFFFEKGVFDEKGNFLVPPEKSINKIGHALHAHDPVFRSITHSPKVQALVRSLGLQMPVVVQSMYIFKQPHFGGEVSPHQDATFLYTEPLGRVLGLWIAMEDAMLENGCLWFIPGSHTRGVSRRMIRAPSDSGPGTSFLGSDPAWASNLFVPLPVRRGGLVLIHGEVVHKSEQNHSDHSRQAYTVHLMEAAGTVWSPGNWLQPTPELPFPPLYS.

Phosphothreonine is present on Thr55. 2-oxoglutarate is bound by residues Lys102, Met141, 156–158 (HQD), and Trp174. 2 residues coordinate Fe cation: His156 and Asp158. Residue His246 participates in Fe cation binding. Residues Ser248 and Arg257 each contribute to the 2-oxoglutarate site.

This sequence belongs to the PhyH family. PHYHD1 subfamily. Requires Fe cation as cofactor.

In terms of biological role, 2-oxoglutarate(2OG)-dependent dioxygenase that catalyzes the conversion of 2-oxoglutarate to succinate and CO(2) in an iron-dependent manner. However, does not couple 2OG turnover to the hydroxylation of acyl-coenzyme A derivatives, implying that it is not directly involved in phytanoyl coenzyme-A metabolism. Does not show detectable activity towards fatty acid CoA thioesters. The protein is Phytanoyl-CoA dioxygenase domain-containing protein 1 of Mus musculus (Mouse).